The primary structure comprises 274 residues: Thiazole synthase (274 aa).

K111 serves as the catalytic Schiff-base intermediate with DXP. Residues G172, 198–199, and 220–221 contribute to the 1-deoxy-D-xylulose 5-phosphate site; these read AG and NS. The tract at residues 251–274 is disordered; that stretch reads RLPERAAASPSSPTTGIIAEAKTK.

It belongs to the ThiG family. As to quaternary structure, homotetramer. Forms heterodimers with either ThiH or ThiS.

Its subcellular location is the cytoplasm. It catalyses the reaction [ThiS sulfur-carrier protein]-C-terminal-Gly-aminoethanethioate + 2-iminoacetate + 1-deoxy-D-xylulose 5-phosphate = [ThiS sulfur-carrier protein]-C-terminal Gly-Gly + 2-[(2R,5Z)-2-carboxy-4-methylthiazol-5(2H)-ylidene]ethyl phosphate + 2 H2O + H(+). It functions in the pathway cofactor biosynthesis; thiamine diphosphate biosynthesis. Its function is as follows. Catalyzes the rearrangement of 1-deoxy-D-xylulose 5-phosphate (DXP) to produce the thiazole phosphate moiety of thiamine. Sulfur is provided by the thiocarboxylate moiety of the carrier protein ThiS. In vitro, sulfur can be provided by H(2)S. The chain is Thiazole synthase from Prochlorococcus marinus (strain MIT 9313).